A 132-amino-acid polypeptide reads, in one-letter code: ATP synthase epsilon chain (132 aa).

It belongs to the ATPase epsilon chain family. As to quaternary structure, F-type ATPases have 2 components, CF(1) - the catalytic core - and CF(0) - the membrane proton channel. CF(1) has five subunits: alpha(3), beta(3), gamma(1), delta(1), epsilon(1). CF(0) has three main subunits: a, b and c.

It is found in the cell membrane. Functionally, produces ATP from ADP in the presence of a proton gradient across the membrane. The chain is ATP synthase epsilon chain from Desulforamulus reducens (strain ATCC BAA-1160 / DSM 100696 / MI-1) (Desulfotomaculum reducens).